We begin with the raw amino-acid sequence, 237 residues long: DNA repair protein RecO (237 aa).

It belongs to the RecO family.

Involved in DNA repair and RecF pathway recombination. This Rickettsia rickettsii (strain Iowa) protein is DNA repair protein RecO.